Consider the following 98-residue polypeptide: MKINQPAVAGTLESGDVMIRIAPLDTQDIDLQINSSVEKQFGDAIRTTILDVLAHYNVRGVQLNVDDKGTLDCILRARLEALLARASGIPTLPWEDCQ.

Position 14 is an O-(phosphoribosyl dephospho-coenzyme A)serine (S14).

The protein belongs to the CitD family. As to quaternary structure, oligomer with a subunit composition of (alpha,beta,gamma)6.

The protein resides in the cytoplasm. Covalent carrier of the coenzyme of citrate lyase. This is Citrate lyase acyl carrier protein from Shigella boydii serotype 18 (strain CDC 3083-94 / BS512).